Here is a 462-residue protein sequence, read N- to C-terminus: Gastric inhibitory polypeptide receptor (462 aa).

The first 18 residues, 1 to 18 (MPLRPRLLLLCLWGLLLQ), serve as a signal peptide directing secretion. The Extracellular segment spans residues 19-135 (QAETDSEGQT…DQRLILERLQ (117 aa)). Cystine bridges form between cysteine 43-cysteine 67, cysteine 58-cysteine 100, and cysteine 81-cysteine 115. N-linked (GlcNAc...) asparagine glycosylation is found at asparagine 59 and asparagine 74. Residues 136–158 (VVYTVGYSLSLGTLLLALLILSL) traverse the membrane as a helical segment. The Cytoplasmic segment spans residues 159-166 (FRRLHCTR). A helical membrane pass occupies residues 167–186 (NYIHMNVFLSFMLRAVAILT). The Extracellular segment spans residues 187–214 (RDRLLPTLGPYPGDRTLTLRNQALAACR). The chain crosses the membrane as a helical span at residues 215-239 (TAQIVTQYCVGANYTWLLVEGVYLH). Topologically, residues 240–251 (HLLVIVGGSEKG) are cytoplasmic. The helical transmembrane segment at 252-275 (HFRCYLLLGWGAPALFVIPWVIVR) threads the bilayer. Residues 276-290 (YLLENTQCWERNEVK) are Extracellular-facing. The chain crosses the membrane as a helical span at residues 291–316 (AIWWIIRTPILITILINFFIFIRILG). Residues 317-338 (ILVSKLRTRQMRCPDYRLRLAR) are Cytoplasmic-facing. Residues 339 to 359 (STLTLVPLLGVHEVVFAPVTE) form a helical membrane-spanning segment. Residues 360–374 (EQAEGTLRFAKLAFE) are Extracellular-facing. Residues 375-395 (IFLSSFQGFLVSVLYCFINKE) traverse the membrane as a helical segment. Topologically, residues 396–462 (VQSEIRRSWR…PGEEVLESYC (67 aa)) are cytoplasmic. The segment at 421–462 (HAELGPQALPSRSAPREVPITGSTLPSGPLHGPGEEVLESYC) is disordered.

The protein belongs to the G-protein coupled receptor 2 family. In terms of assembly, may form homodimers and heterodimers with GLP1R. Post-translationally, N-glycosylation is required for cell surface expression and lengthens receptor half-life by preventing degradation in the ER. In terms of tissue distribution, widely distributed including pancreatic islets, brain and various peripheral tissues.

The protein resides in the cell membrane. In terms of biological role, this is a receptor for GIP. The activity of this receptor is mediated by G proteins which activate adenylyl cyclase. The chain is Gastric inhibitory polypeptide receptor (GIPR) from Mesocricetus auratus (Golden hamster).